Reading from the N-terminus, the 427-residue chain is Septin-8 (427 aa).

In terms of domain architecture, Septin-type G spans 39–305 (QGFCFNILCV…ELYRRCKLEE (267 aa)). The G1 motif stretch occupies residues 49–56 (GETGIGKS). GTP is bound by residues 49 to 56 (GETGIGKS), Gly104, 185 to 193 (KADTISKSE), Gly239, and Arg254. Residues 101 to 104 (DTVG) form a G3 motif region. The G4 motif stretch occupies residues 184–187 (AKAD). Residues 321-409 (QETYEAKRKE…KAAMEALQSQ (89 aa)) adopt a coiled-coil conformation. The disordered stretch occupies residues 373-427 (RVHQEESKKVEDKRRDLEEEMNSFNRRKAAMEALQSQSFQATSQQPLKKDKDRKN). The span at 374–389 (VHQEESKKVEDKRRDL) shows a compositional bias: basic and acidic residues. Residues 406-418 (LQSQSFQATSQQP) are compositionally biased toward polar residues.

Belongs to the TRAFAC class TrmE-Era-EngA-EngB-Septin-like GTPase superfamily. Septin GTPase family.

It is found in the cytoplasm. The protein resides in the cytoskeleton. The protein localises to the synapse. It localises to the cell projection. Its subcellular location is the axon. It is found in the cytoplasmic vesicle. The protein resides in the secretory vesicle. The protein localises to the synaptic vesicle membrane. It localises to the presynapse. This is Septin-8 from Xenopus tropicalis (Western clawed frog).